The primary structure comprises 406 residues: Trk system potassium uptake protein trkA homolog 1 (406 aa).

One can recognise an RCK N-terminal 1 domain in the interval 1-124 (MKAVIIGAGE…RAQVGVDLMI (124 aa)). NAD(+) is bound by residues 7 to 11 (GAGEV), Asp-29, 70 to 71 (TG), and Arg-101. Residues 144–225 (IDAEMFAEGK…MEDLESVFGS (82 aa)) enclose the RCK C-terminal domain. Residues 230–348 (RTRILLIGCG…FEMVGIDMAV (119 aa)) enclose the RCK N-terminal 2 domain. NAD(+) is bound at residue 232-262 (RILLIGCGIVGMYLAKLIDKEENADLRIIEH).

Part of a potassium transport system. This chain is Trk system potassium uptake protein trkA homolog 1 (trkA1), found in Methanosarcina mazei (Methanosarcina frisia).